Reading from the N-terminus, the 226-residue chain is MALSDADVQKQIKHMMAFIEQEANEKAEEIDAKAEEEFNIEKGRLVQQQRLKIMEYYEKKEKQVELQKKIQSSNMLNQARLKVLKVREDHVSSVLDDARKRLGEVTKNQSEYETVLTKLIVQGLFQIMEPKVILRCREVDVPLVRNVLPAAVEQYKAQINQNVELFIDEKDFLSADTCGGVELLALNGRIKVPNTLESRLDLISQQLVPEIRNALFGRNVNRKFTD.

Belongs to the V-ATPase E subunit family. As to quaternary structure, V-ATPase is a heteromultimeric enzyme made up of two complexes: the ATP-hydrolytic V1 complex and the proton translocation V0 complex. The V1 complex consists of three catalytic AB heterodimers that form a heterohexamer, three peripheral stalks each consisting of EG heterodimers, one central rotor including subunits D and F, and the regulatory subunits C and H. The proton translocation complex V0 consists of the proton transport subunit a, a ring of proteolipid subunits c9c'', rotary subunit d, subunits e and f, and the accessory subunits VhaAC45 and ATP6AP2.

In terms of biological role, subunit of the V1 complex of vacuolar(H+)-ATPase (V-ATPase), a multisubunit enzyme composed of a peripheral complex (V1) that hydrolyzes ATP and a membrane integral complex (V0) that translocates protons. V-ATPase is responsible for acidifying and maintaining the pH of intracellular compartments and in some cell types, is targeted to the plasma membrane, where it is responsible for acidifying the extracellular environment. The sequence is that of V-type proton ATPase subunit E (Vha26) from Drosophila melanogaster (Fruit fly).